We begin with the raw amino-acid sequence, 477 residues long: Glycogen synthase (477 aa).

An ADP-alpha-D-glucose-binding site is contributed by Lys15.

The protein belongs to the glycosyltransferase 1 family. Bacterial/plant glycogen synthase subfamily.

It carries out the reaction [(1-&gt;4)-alpha-D-glucosyl](n) + ADP-alpha-D-glucose = [(1-&gt;4)-alpha-D-glucosyl](n+1) + ADP + H(+). Its pathway is glycan biosynthesis; glycogen biosynthesis. Functionally, synthesizes alpha-1,4-glucan chains using ADP-glucose. In Glaesserella parasuis serovar 5 (strain SH0165) (Haemophilus parasuis), this protein is Glycogen synthase.